The sequence spans 317 residues: tRNA uridine(34) hydroxylase (317 aa).

One can recognise a Rhodanese domain in the interval 123–217 (EDDDTIVIDA…YGKDPETKGE (95 aa)). Residue C177 is the Cysteine persulfide intermediate of the active site.

This sequence belongs to the TrhO family.

The catalysed reaction is uridine(34) in tRNA + AH2 + O2 = 5-hydroxyuridine(34) in tRNA + A + H2O. In terms of biological role, catalyzes oxygen-dependent 5-hydroxyuridine (ho5U) modification at position 34 in tRNAs. This is tRNA uridine(34) hydroxylase from Staphylococcus carnosus (strain TM300).